Consider the following 118-residue polypeptide: uncharacterized protein (118 aa).

A disordered region spans residues 49–80 (SKEEHTTSAANLHPRKKKRMPPRRAEKNKAPN). Basic residues predominate over residues 61-70 (HPRKKKRMPP).

This is an uncharacterized protein from Saccharomyces cerevisiae (strain ATCC 204508 / S288c) (Baker's yeast).